The chain runs to 487 residues: Serine/threonine-protein phosphatase 2A activator 1 (487 aa).

Disordered stretches follow at residues 1-28 (MPMI…SSST) and 426-487 (GGIQ…PKPE).

Belongs to the PTPA-type PPIase family.

The protein resides in the cytoplasm. It localises to the nucleus. It catalyses the reaction [protein]-peptidylproline (omega=180) = [protein]-peptidylproline (omega=0). In terms of biological role, PPIases accelerate the folding of proteins. It catalyzes the cis-trans isomerization of proline imidic peptide bonds in oligopeptides. Acts as a regulatory subunit for PP2A-like phosphatases modulating their activity or substrate specificity, probably by inducing a conformational change in the catalytic subunit, a direct target of the PPIase. Can reactivate inactive phosphatase PP2A-phosphatase methylesterase complexes (PP2Ai) in presence of ATP and Mg(2+) by dissociating the inactive form from the complex. The polypeptide is Serine/threonine-protein phosphatase 2A activator 1 (RRD1) (Mycosarcoma maydis (Corn smut fungus)).